The sequence spans 121 residues: Large ribosomal subunit protein bL12 (121 aa).

The protein belongs to the bacterial ribosomal protein bL12 family. In terms of assembly, homodimer. Part of the ribosomal stalk of the 50S ribosomal subunit. Forms a multimeric L10(L12)X complex, where L10 forms an elongated spine to which 2 to 4 L12 dimers bind in a sequential fashion. Binds GTP-bound translation factors.

Functionally, forms part of the ribosomal stalk which helps the ribosome interact with GTP-bound translation factors. Is thus essential for accurate translation. The polypeptide is Large ribosomal subunit protein bL12 (Erwinia tasmaniensis (strain DSM 17950 / CFBP 7177 / CIP 109463 / NCPPB 4357 / Et1/99)).